The chain runs to 131 residues: Large ribosomal subunit protein bL17 (131 aa).

This sequence belongs to the bacterial ribosomal protein bL17 family. Part of the 50S ribosomal subunit. Contacts protein L32.

The protein is Large ribosomal subunit protein bL17 of Burkholderia mallei (strain NCTC 10229).